The primary structure comprises 94 residues: Protein SKIP34 (94 aa).

A disordered region spans residues 1 to 27; the sequence is MCYGHNQSLSSRSSLRRRSHDGEDDSV. Positions 23-61 form a coiled coil; that stretch reads EDDSVVDDLRDRLAETEARLRRARAREAELSRRLEHMKR.

As to quaternary structure, interacts with SPK1B/ASK2.

This is Protein SKIP34 (SKIP34) from Arabidopsis thaliana (Mouse-ear cress).